The sequence spans 128 residues: uncharacterized protein (128 aa).

2 disordered regions span residues 62-83 (LNPS…SPRV) and 101-128 (FAAS…RYQP). Positions 101 to 114 (FAASSSSTAPVTVT) are enriched in low complexity.

It localises to the cytoplasm. The protein resides in the nucleus. This is an uncharacterized protein from Saccharomyces cerevisiae (strain ATCC 204508 / S288c) (Baker's yeast).